We begin with the raw amino-acid sequence, 184 residues long: F(420)H(2) dehydrogenase subunit B (184 aa).

A disordered region spans residues M1–V20. Positions 61, 62, 126, and 156 each coordinate [4Fe-4S] cluster.

Belongs to the complex I 20 kDa subunit family. The FPO complex is composed of at least 13 different subunits. FAD serves as cofactor. Requires [4Fe-4S] cluster as cofactor.

Its subcellular location is the cell inner membrane. It carries out the reaction methanophenazine + reduced coenzyme F420-(gamma-L-Glu)(n) = dihydromethanophenazine + oxidized coenzyme F420-(gamma-L-Glu)(n) + H(+). Functionally, component of the F(420)H(2) dehydrogenase (FPO complex) which is part of the energy-conserving F(420)H(2):heterodisulfide oxidoreductase system. The membrane-bound electron transfer system of the complex plays an important role in the metabolism of methylotrophic methanogens when the organisms grow on methanol or methylamines. Catalyzes the oxidation of methanophenazine to dihydromethanophenazine. It shuttles electrons from F(420)H(2), via FAD and iron-sulfur (Fe-S) centers, to methanophenazine (an electron carrier in the membrane). It couples the redox reaction to proton translocation (for every two electrons transferred, two hydrogen ions are translocated across the cytoplasmic membrane), and thus conserves the redox energy in a proton gradient. It also catalyzes the oxidation of F(420)H(2) with quinones such as 2,3-dimethyl-1,4-naphthoquinone, 2-methyl-1,4-naphthoquinone and tetramethyl-p-benzoquinone. The protein is F(420)H(2) dehydrogenase subunit B (fpoB) of Methanosarcina mazei (strain ATCC BAA-159 / DSM 3647 / Goe1 / Go1 / JCM 11833 / OCM 88) (Methanosarcina frisia).